The sequence spans 410 residues: Argininosuccinate synthase (410 aa).

9-17 (AYSGGLDTS) contributes to the ATP binding site. Tyrosine 86 provides a ligand contact to L-citrulline. Glycine 116 serves as a coordination point for ATP. Residues threonine 118, asparagine 122, and aspartate 123 each contribute to the L-aspartate site. Asparagine 122 lines the L-citrulline pocket. The L-citrulline site is built by arginine 126, serine 174, glutamate 259, and tyrosine 271.

This sequence belongs to the argininosuccinate synthase family. Type 1 subfamily. In terms of assembly, homotetramer.

It localises to the cytoplasm. It carries out the reaction L-citrulline + L-aspartate + ATP = 2-(N(omega)-L-arginino)succinate + AMP + diphosphate + H(+). It functions in the pathway amino-acid biosynthesis; L-arginine biosynthesis; L-arginine from L-ornithine and carbamoyl phosphate: step 2/3. In Limosilactobacillus reuteri (strain DSM 20016) (Lactobacillus reuteri), this protein is Argininosuccinate synthase.